Here is a 637-residue protein sequence, read N- to C-terminus: ATP-dependent zinc metalloprotease FtsH (637 aa).

Over 1 to 7 (MNRVFRN) the chain is Cytoplasmic. A helical membrane pass occupies residues 8-28 (TIFYLLILLVVIGVVSYFQTS). The Extracellular segment spans residues 29-109 (NPKTENMSYS…VEPAQETSGW (81 aa)). Residues 110–130 (VTFLTTIIPFVIIFILFFFLL) form a helical membrane-spanning segment. The Cytoplasmic portion of the chain corresponds to 131–637 (NQAQGGGSRV…TEEKKDDTKE (507 aa)). Residue 201–208 (GPPGTGKT) coordinates ATP. His-423 is a binding site for Zn(2+). Glu-424 is an active-site residue. Positions 427 and 499 each coordinate Zn(2+). Residues 514 to 637 (FGMSEKLGPL…TEEKKDDTKE (124 aa)) form a not necessary for FtsH function region.

In the central section; belongs to the AAA ATPase family. It in the C-terminal section; belongs to the peptidase M41 family. In terms of assembly, homohexamer. Interacts with FloT at midcell. Interacts with FloA at midcell. Another study shows only minor colocalization with FloA or FloT. Zn(2+) is required as a cofactor.

The protein resides in the cell membrane. The protein localises to the membrane raft. Functionally, acts as a processive, ATP-dependent zinc metallopeptidase for both cytoplasmic and membrane proteins. Plays a role in the quality control of integral membrane proteins. In terms of biological role, in vitro partially degrades Spo0E, the phosphatase that acts on Spo0A-P. Recognition requires the last 14 residues of Spo0E. Its stabile accumulation requires FlotA and Flot. May degrade EzrA. The protein is ATP-dependent zinc metalloprotease FtsH of Bacillus subtilis (strain 168).